We begin with the raw amino-acid sequence, 365 residues long: Phospho-N-acetylmuramoyl-pentapeptide-transferase (365 aa).

The next 10 membrane-spanning stretches (helical) occupy residues His3–Ile23, Gly54–Phe74, Pro81–Leu101, Gly119–Leu139, Ile162–Val182, Leu198–Phe218, Leu239–Ala259, Ile263–Thr283, Leu289–Val309, and Phe342–Leu362.

This sequence belongs to the glycosyltransferase 4 family. MraY subfamily. Mg(2+) serves as cofactor.

The protein resides in the cell membrane. The enzyme catalyses UDP-N-acetyl-alpha-D-muramoyl-L-alanyl-gamma-D-glutamyl-meso-2,6-diaminopimeloyl-D-alanyl-D-alanine + di-trans,octa-cis-undecaprenyl phosphate = di-trans,octa-cis-undecaprenyl diphospho-N-acetyl-alpha-D-muramoyl-L-alanyl-D-glutamyl-meso-2,6-diaminopimeloyl-D-alanyl-D-alanine + UMP. It functions in the pathway cell wall biogenesis; peptidoglycan biosynthesis. In terms of biological role, catalyzes the initial step of the lipid cycle reactions in the biosynthesis of the cell wall peptidoglycan: transfers peptidoglycan precursor phospho-MurNAc-pentapeptide from UDP-MurNAc-pentapeptide onto the lipid carrier undecaprenyl phosphate, yielding undecaprenyl-pyrophosphoryl-MurNAc-pentapeptide, known as lipid I. This is Phospho-N-acetylmuramoyl-pentapeptide-transferase from Corynebacterium kroppenstedtii (strain DSM 44385 / JCM 11950 / CIP 105744 / CCUG 35717).